A 361-amino-acid polypeptide reads, in one-letter code: Mitochondrial fission regulator 2 (361 aa).

Residue Ser137 is modified to Phosphoserine. 2 disordered regions span residues 191-286 and 298-322; these read FIDL…VPNM and LRPV…EWDP. Over residues 219-231 the composition is skewed to pro residues; it reads VLPPPPPPPPPPQ. The span at 232 to 244 shows a compositional bias: low complexity; the sequence is FSLQPPSSLPMQP. Positions 250 to 282 are enriched in basic and acidic residues; sequence HDIDSLATEMERQLSGVKKTDDSHHSKSQRLRD. A phosphoserine mark is found at Ser304 and Ser340.

The protein belongs to the MTFR1 family. In terms of tissue distribution, expressed predominantly in testis (at protein level). Expressed to a lower extent in spleen.

It is found in the mitochondrion. Its function is as follows. May play a role in mitochondrial aerobic respiration essentially in the testis. Can also promote mitochondrial fission. This Mus musculus (Mouse) protein is Mitochondrial fission regulator 2 (Mtfr2).